The primary structure comprises 105 residues: U-scoloptoxin(05)-Ssd1a (105 aa).

The signal sequence occupies residues methionine 1 to alanine 24. The interval histidine 79 to asparagine 105 is disordered. Over residues threonine 92–asparagine 105 the composition is skewed to polar residues.

It belongs to the scoloptoxin-05 family. Post-translationally, contains 4 disulfide bonds. Expressed by the venom gland.

The protein localises to the secreted. The sequence is that of U-scoloptoxin(05)-Ssd1a from Scolopendra dehaani (Thai centipede).